A 151-amino-acid chain; its full sequence is Small ribosomal subunit protein uS13 (151 aa).

This sequence belongs to the universal ribosomal protein uS13 family. As to quaternary structure, part of the 30S ribosomal subunit. Forms a loose heterodimer with protein S19. Forms two bridges to the 50S subunit in the 70S ribosome.

In terms of biological role, located at the top of the head of the 30S subunit, it contacts several helices of the 16S rRNA. In the 70S ribosome it contacts the 23S rRNA (bridge B1a) and protein L5 of the 50S subunit (bridge B1b), connecting the 2 subunits; these bridges are implicated in subunit movement. The protein is Small ribosomal subunit protein uS13 of Hyperthermus butylicus (strain DSM 5456 / JCM 9403 / PLM1-5).